We begin with the raw amino-acid sequence, 343 residues long: S-adenosylmethionine:tRNA ribosyltransferase-isomerase (343 aa).

The protein belongs to the QueA family. Monomer.

The protein localises to the cytoplasm. The enzyme catalyses 7-aminomethyl-7-carbaguanosine(34) in tRNA + S-adenosyl-L-methionine = epoxyqueuosine(34) in tRNA + adenine + L-methionine + 2 H(+). It participates in tRNA modification; tRNA-queuosine biosynthesis. Its function is as follows. Transfers and isomerizes the ribose moiety from AdoMet to the 7-aminomethyl group of 7-deazaguanine (preQ1-tRNA) to give epoxyqueuosine (oQ-tRNA). This Latilactobacillus sakei subsp. sakei (strain 23K) (Lactobacillus sakei subsp. sakei) protein is S-adenosylmethionine:tRNA ribosyltransferase-isomerase.